A 194-amino-acid chain; its full sequence is ATP-dependent Clp protease proteolytic subunit (194 aa).

The active-site Nucleophile is Ser-98. Residue His-123 is part of the active site.

Belongs to the peptidase S14 family. As to quaternary structure, fourteen ClpP subunits assemble into 2 heptameric rings which stack back to back to give a disk-like structure with a central cavity, resembling the structure of eukaryotic proteasomes.

Its subcellular location is the cytoplasm. The enzyme catalyses Hydrolysis of proteins to small peptides in the presence of ATP and magnesium. alpha-casein is the usual test substrate. In the absence of ATP, only oligopeptides shorter than five residues are hydrolyzed (such as succinyl-Leu-Tyr-|-NHMec, and Leu-Tyr-Leu-|-Tyr-Trp, in which cleavage of the -Tyr-|-Leu- and -Tyr-|-Trp bonds also occurs).. In terms of biological role, cleaves peptides in various proteins in a process that requires ATP hydrolysis. Has a chymotrypsin-like activity. Plays a major role in the degradation of misfolded proteins. This Staphylococcus epidermidis (strain ATCC 35984 / DSM 28319 / BCRC 17069 / CCUG 31568 / BM 3577 / RP62A) protein is ATP-dependent Clp protease proteolytic subunit.